We begin with the raw amino-acid sequence, 85 residues long: MDISRTEQRILHLMAQGGRIEIIRDDNRKIENVSCFTRDGWLYPGVDLDLFRRLKRLKAIKSSGGQPYRITERGLRLVRSQLDNR.

Belongs to the UPF0386 family.

This Rhizobium etli (strain ATCC 51251 / DSM 11541 / JCM 21823 / NBRC 15573 / CFN 42) protein is UPF0386 protein RHE_CH01859.